Here is a 671-residue protein sequence, read N- to C-terminus: DNA ligase (671 aa).

NAD(+) contacts are provided by residues 32 to 36 (DAEYD), 81 to 82 (SL), and glutamate 113. The active-site N6-AMP-lysine intermediate is lysine 115. 4 residues coordinate NAD(+): arginine 136, glutamate 173, lysine 290, and lysine 314. Zn(2+) is bound by residues cysteine 408, cysteine 411, cysteine 426, and cysteine 432. Positions 593 to 671 (EIDSPFAGKT…ETEMLRLLGS (79 aa)) constitute a BRCT domain.

The protein belongs to the NAD-dependent DNA ligase family. LigA subfamily. It depends on Mg(2+) as a cofactor. Mn(2+) is required as a cofactor.

It catalyses the reaction NAD(+) + (deoxyribonucleotide)n-3'-hydroxyl + 5'-phospho-(deoxyribonucleotide)m = (deoxyribonucleotide)n+m + AMP + beta-nicotinamide D-nucleotide.. DNA ligase that catalyzes the formation of phosphodiester linkages between 5'-phosphoryl and 3'-hydroxyl groups in double-stranded DNA using NAD as a coenzyme and as the energy source for the reaction. It is essential for DNA replication and repair of damaged DNA. The chain is DNA ligase from Escherichia coli O127:H6 (strain E2348/69 / EPEC).